The primary structure comprises 393 residues: MDFGALPPEVNSVRMYAGPGSAPMVAAASAWNGLAAELSSAATGYETVITQLSSEGWLGPASAAMAEAVAPYVAWMSAAAAQAEQAATQARAAAAAFEAAFAATVPPPLIAANRASLMQLISTNVFGQNTSAIAAAEAQYGEMWAQDSAAMYAYAGSSASASAVTPFSTPPQIANPTAQGTQAAAVATAAGTAQSTLTEMITGLPNALQSLTSPLLQSSNGPLSWLWQILFGTPNFPTSISALLTDLQPYASFFYNTEGLPYFSIGMGNNFIQSAKTLGLIGSAAPAAVAAAGDAAKGLPGLGGMLGGGPVAAGLGNAASVGKLSVPPVWSGPLPGSVTPGAAPLPVSTVSAAPEAAPGSLLGGLPLAGAGGAGAGPRYGFRPTVMARPPFAG.

The protein belongs to the mycobacterial PPE family. As to quaternary structure, interacts with human TLR2.

In terms of biological role, probably plays a key role in regulating innate and adaptive immune responses through human Toll-like receptor 2 (TLR2). Interacts with TLR2, leading to the subsequent activation of the mitogen-activated protein kinase (MAPK) and nuclear factor kappa B (NF-kappa-B) signaling pathways. Stimulates macrophage activation by augmenting pro-inflammatory cytokine production (TNF-alpha, IL-6 and IL-12p40) and the expression of cell surface molecules (CD80, CD86, MHC class I and II). Also participates in adaptive immunity by directing Th1-polarised immune responses. This Mycobacterium tuberculosis (strain ATCC 25618 / H37Rv) protein is PPE family protein PPE26.